We begin with the raw amino-acid sequence, 373 residues long: Phosphoserine aminotransferase (373 aa).

Arg-46 is a binding site for L-glutamate. Pyridoxal 5'-phosphate is bound by residues Phe-104, Thr-150, Asp-172, and Gln-195. Lys-196 is modified (N6-(pyridoxal phosphate)lysine). 247-248 (NT) serves as a coordination point for pyridoxal 5'-phosphate.

Belongs to the class-V pyridoxal-phosphate-dependent aminotransferase family. SerC subfamily. As to quaternary structure, homodimer. Requires pyridoxal 5'-phosphate as cofactor.

Its subcellular location is the cytoplasm. The enzyme catalyses O-phospho-L-serine + 2-oxoglutarate = 3-phosphooxypyruvate + L-glutamate. It catalyses the reaction 4-(phosphooxy)-L-threonine + 2-oxoglutarate = (R)-3-hydroxy-2-oxo-4-phosphooxybutanoate + L-glutamate. The protein operates within amino-acid biosynthesis; L-serine biosynthesis; L-serine from 3-phospho-D-glycerate: step 2/3. It functions in the pathway cofactor biosynthesis; pyridoxine 5'-phosphate biosynthesis; pyridoxine 5'-phosphate from D-erythrose 4-phosphate: step 3/5. In terms of biological role, catalyzes the reversible conversion of 3-phosphohydroxypyruvate to phosphoserine and of 3-hydroxy-2-oxo-4-phosphonooxybutanoate to phosphohydroxythreonine. The protein is Phosphoserine aminotransferase of Rhodococcus opacus (strain B4).